The primary structure comprises 388 residues: Chorismate synthase (388 aa).

NADP(+)-binding residues include R39 and R45. Residues 130 to 132 (RSS), 251 to 252 (NA), G296, 311 to 315 (KPIPT), and R337 each bind FMN.

The protein belongs to the chorismate synthase family. In terms of assembly, homotetramer. FMNH2 serves as cofactor.

The enzyme catalyses 5-O-(1-carboxyvinyl)-3-phosphoshikimate = chorismate + phosphate. Its pathway is metabolic intermediate biosynthesis; chorismate biosynthesis; chorismate from D-erythrose 4-phosphate and phosphoenolpyruvate: step 7/7. Functionally, catalyzes the anti-1,4-elimination of the C-3 phosphate and the C-6 proR hydrogen from 5-enolpyruvylshikimate-3-phosphate (EPSP) to yield chorismate, which is the branch point compound that serves as the starting substrate for the three terminal pathways of aromatic amino acid biosynthesis. This reaction introduces a second double bond into the aromatic ring system. The sequence is that of Chorismate synthase from Streptococcus pyogenes serotype M2 (strain MGAS10270).